The following is a 252-amino-acid chain: Octanoyltransferase (252 aa).

The 182-residue stretch at 56–237 folds into the BPL/LPL catalytic domain; sequence ADTGDEIWLV…RLIANLDGAS (182 aa). Residues 96–103, 168–170, and 181–183 each bind substrate; these read RGGQITYH, ALG, and GLS. Cysteine 199 (acyl-thioester intermediate) is an active-site residue.

Belongs to the LipB family.

The protein localises to the cytoplasm. The catalysed reaction is octanoyl-[ACP] + L-lysyl-[protein] = N(6)-octanoyl-L-lysyl-[protein] + holo-[ACP] + H(+). It functions in the pathway protein modification; protein lipoylation via endogenous pathway; protein N(6)-(lipoyl)lysine from octanoyl-[acyl-carrier-protein]: step 1/2. Functionally, catalyzes the transfer of endogenously produced octanoic acid from octanoyl-acyl-carrier-protein onto the lipoyl domains of lipoate-dependent enzymes. Lipoyl-ACP can also act as a substrate although octanoyl-ACP is likely to be the physiological substrate. The chain is Octanoyltransferase from Burkholderia lata (strain ATCC 17760 / DSM 23089 / LMG 22485 / NCIMB 9086 / R18194 / 383).